The primary structure comprises 455 residues: Folate transporter 2 (455 aa).

The next 8 helical transmembrane spans lie at 42–64, 84–103, 110–131, 137–157, 177–195, 201–221, 242–261, and 281–301; these read IVVY…IYYL, YIPF…FSIF, YLFL…LNLS, LILF…EALV, IASK…GYFL, EYIF…CLFL, FINT…YMSG, and SFMG…IIIY. N-linked (GlcNAc...) asparagine glycosylation is present at N307. 2 helical membrane-spanning segments follow: residues 313-331 and 347-367; these read TLII…PIIL and VLSG…PLFI. N416 carries an N-linked (GlcNAc...) asparagine glycan. A helical transmembrane segment spans residues 417 to 438; the sequence is LSLYILTCGFFLLFSLTLVPLL.

This sequence belongs to the major facilitator superfamily. Folate-biopterin transporter (TC 2.A.71) family.

It localises to the cell membrane. It catalyses the reaction folate(in) + H(+)(in) = folate(out) + H(+)(out). The catalysed reaction is (6S)-5-methyl-5,6,7,8-tetrahydrofolate(in) + H(+)(in) = (6S)-5-methyl-5,6,7,8-tetrahydrofolate(out) + H(+)(out). With respect to regulation, transport of folates is inhibited by probenecid and methotrexate. Folate transporter with broad substrate specificity. Transports folic acid, folinic acid, pteroic acid, dihydropteroic acid, the folate precursor p-amino benzoic acid (pABA) and the human folate catabolite pABA monoglutamate. Can transport 5-methyltetrahydrofolate with low efficiency. The sequence is that of Folate transporter 2 from Plasmodium falciparum (isolate 3D7).